The sequence spans 114 residues: Iron-sulfur cluster insertion protein ErpA (114 aa).

3 residues coordinate iron-sulfur cluster: C42, C106, and C108.

It belongs to the HesB/IscA family. As to quaternary structure, homodimer. Iron-sulfur cluster is required as a cofactor.

Functionally, required for insertion of 4Fe-4S clusters for at least IspG. The chain is Iron-sulfur cluster insertion protein ErpA from Sodalis glossinidius (strain morsitans).